The primary structure comprises 375 residues: Probable neutral protease 2 homolog ARB_05817 (375 aa).

A signal peptide spans 1–19; it reads MQVIVALAALGSLAAPALG. Positions 20–189 are excised as a propeptide; it reads FSIPRGVPVS…RGPLTRINKR (170 aa). Disulfide bonds link cysteine 197-cysteine 267 and cysteine 274-cysteine 292. Histidine 317 serves as a coordination point for Zn(2+). The active site involves glutamate 318. Positions 321 and 332 each coordinate Zn(2+).

It belongs to the peptidase M35 family. It depends on Zn(2+) as a cofactor.

The protein resides in the secreted. It catalyses the reaction Preferential cleavage of bonds with hydrophobic residues in P1'. Also 3-Asn-|-Gln-4 and 8-Gly-|-Ser-9 bonds in insulin B chain.. In terms of biological role, probable secreted metalloprotease that shows high activities on basic nuclear substrates such as histone and protamine. May be involved in virulence. This chain is Probable neutral protease 2 homolog ARB_05817, found in Arthroderma benhamiae (strain ATCC MYA-4681 / CBS 112371) (Trichophyton mentagrophytes).